A 389-amino-acid polypeptide reads, in one-letter code: Mitochondrial carrier homolog 1 (389 aa).

The tract at residues 1–78 (MGASDPEVAP…PGAPGSGDNA (78 aa)) is disordered. The Mitochondrial intermembrane segment spans residues 1-93 (MGASDPEVAP…LFVALGAGVT (93 aa)). Over residues 15–33 (GAAGMAGAGAGAGARGGAP) the composition is skewed to gly residues. An Omega-N-methylarginine modification is found at Arg29. Solcar repeat units follow at residues 81 to 176 (TEAL…FPPD) and 192 to 280 (KKVV…INAY). A helical transmembrane segment spans residues 94-104 (ALSHPLLYVKL). Topologically, residues 105-155 (LIQVGHEPMPPTLGTNVLGRKVLYLPSFFTYAKYIVQVDGKIGLFRGLSPR) are cytoplasmic. The helical transmembrane segment at 156-176 (LMSNALSTVTRGSMKKVFPPD) threads the bilayer. The Mitochondrial intermembrane portion of the chain corresponds to 177–209 (EMEQVSNKDDMKTSLKKVVKETSYEMMMQCVSR). A helical membrane pass occupies residues 210–229 (MLAHPLHVISMRCMVQFVGR). Topologically, residues 230-254 (EAKYSGVLSSIGKIFKEEGLLGFFV) are cytoplasmic. The helical transmembrane segment at 255-279 (GLIPHLLGDVVFLWGCNLLAHFINA) threads the bilayer. The Mitochondrial intermembrane segment spans residues 280–322 (YLVDDSVSDTPGGLGNDQNPGSQFSQALAIRSYTKFVMGIAVS). A helical membrane pass occupies residues 323–342 (MLTYPFLLVGDLMAVNNCGL). Residues 343–371 (RAGLPPYSPVFKSWIHCWKYLSVQGQLFR) are Cytoplasmic-facing. The chain crosses the membrane as a helical span at residues 372-389 (GSSLLFRRVSSGSCFALE).

The protein belongs to the mitochondrial carrier (TC 2.A.29) family. Interacts with PSEN1.

The protein localises to the mitochondrion outer membrane. Its function is as follows. Protein insertase that mediates insertion of transmembrane proteins into the mitochondrial outer membrane. Catalyzes insertion of proteins with alpha-helical transmembrane regions, such as signal-anchored, tail-anchored and multi-pass membrane proteins. Does not mediate insertion of beta-barrel transmembrane proteins. May play a role in apoptosis. This Mus musculus (Mouse) protein is Mitochondrial carrier homolog 1 (Mtch1).